The sequence spans 233 residues: Phosphoribosylaminoimidazole-succinocarboxamide synthase (233 aa).

It belongs to the SAICAR synthetase family.

The catalysed reaction is 5-amino-1-(5-phospho-D-ribosyl)imidazole-4-carboxylate + L-aspartate + ATP = (2S)-2-[5-amino-1-(5-phospho-beta-D-ribosyl)imidazole-4-carboxamido]succinate + ADP + phosphate + 2 H(+). The protein operates within purine metabolism; IMP biosynthesis via de novo pathway; 5-amino-1-(5-phospho-D-ribosyl)imidazole-4-carboxamide from 5-amino-1-(5-phospho-D-ribosyl)imidazole-4-carboxylate: step 1/2. The sequence is that of Phosphoribosylaminoimidazole-succinocarboxamide synthase from Thermococcus sibiricus (strain DSM 12597 / MM 739).